We begin with the raw amino-acid sequence, 445 residues long: Argininosuccinate synthase (445 aa).

Residues 17–25 (AFSGGLDTS) and alanine 43 each bind ATP. Tyrosine 99 lines the L-citrulline pocket. 2 residues coordinate ATP: glycine 129 and threonine 131. The L-aspartate site is built by threonine 131, asparagine 135, and aspartate 136. Position 135 (asparagine 135) interacts with L-citrulline. Aspartate 136 serves as a coordination point for ATP. 2 residues coordinate L-citrulline: arginine 139 and serine 192. Residue aspartate 194 coordinates ATP. Threonine 201, glutamate 203, and glutamate 280 together coordinate L-citrulline.

The protein belongs to the argininosuccinate synthase family. Type 2 subfamily. In terms of assembly, homotetramer.

The protein localises to the cytoplasm. It catalyses the reaction L-citrulline + L-aspartate + ATP = 2-(N(omega)-L-arginino)succinate + AMP + diphosphate + H(+). It functions in the pathway amino-acid biosynthesis; L-arginine biosynthesis; L-arginine from L-ornithine and carbamoyl phosphate: step 2/3. This is Argininosuccinate synthase from Rhodopseudomonas palustris (strain ATCC BAA-98 / CGA009).